The chain runs to 398 residues: Succinate--CoA ligase [ADP-forming] subunit beta (398 aa).

The ATP-grasp domain maps to 9–254; the sequence is KALLKSFGAP…KTEEDAKEIE (246 aa). ATP-binding positions include lysine 46, 53–55, glutamate 109, alanine 112, and glutamate 117; that span reads GRG. Residues asparagine 209 and aspartate 223 each contribute to the Mg(2+) site. Substrate-binding positions include asparagine 274 and 331 to 333; that span reads GIM.

The protein belongs to the succinate/malate CoA ligase beta subunit family. Heterotetramer of two alpha and two beta subunits. Requires Mg(2+) as cofactor.

It catalyses the reaction succinate + ATP + CoA = succinyl-CoA + ADP + phosphate. The enzyme catalyses GTP + succinate + CoA = succinyl-CoA + GDP + phosphate. The protein operates within carbohydrate metabolism; tricarboxylic acid cycle; succinate from succinyl-CoA (ligase route): step 1/1. Its function is as follows. Succinyl-CoA synthetase functions in the citric acid cycle (TCA), coupling the hydrolysis of succinyl-CoA to the synthesis of either ATP or GTP and thus represents the only step of substrate-level phosphorylation in the TCA. The beta subunit provides nucleotide specificity of the enzyme and binds the substrate succinate, while the binding sites for coenzyme A and phosphate are found in the alpha subunit. The polypeptide is Succinate--CoA ligase [ADP-forming] subunit beta (Allorhizobium ampelinum (strain ATCC BAA-846 / DSM 112012 / S4) (Agrobacterium vitis (strain S4))).